Reading from the N-terminus, the 138-residue chain is Putative thioredoxin-like protein 453L (138 aa).

Positions 3 to 138 constitute a Thioredoxin domain; it reads QQKYFEKPVY…FNNIVNYVMG (136 aa). Catalysis depends on nucleophile residues Cys44 and Cys47. Cys44 and Cys47 are oxidised to a cystine.

Belongs to the thioredoxin family.

In terms of biological role, participates in various redox reactions through the reversible oxidation of its active center dithiol to a disulfide and catalyzes dithiol-disulfide exchange reactions. This Acheta domesticus (House cricket) protein is Putative thioredoxin-like protein 453L.